A 654-amino-acid chain; its full sequence is Peptide-N(4)-(N-acetyl-beta-glucosaminyl)asparagine amidase (654 aa).

A2 is modified (N-acetylalanine). The 62-residue stretch at 30 to 91 (EASKLLLTYA…EGETHLIFPK (62 aa)) folds into the PUB domain. Residues 112-123 (RLDGSNKSHKVE) show a composition bias toward basic and acidic residues. The disordered stretch occupies residues 112 to 167 (RLDGSNKSHKVESSQQPAASTQLPTTPSSNPSGLNQHTRNRQGQSPDPPSASTVTP). Residues 124 to 167 (SSQQPAASTQLPTTPSSNPSGLNQHTRNRQGQSPDPPSASTVTP) are compositionally biased toward polar residues. T137 carries the phosphothreonine modification. Residues C250, C253, C283, and C286 each coordinate Zn(2+). Catalysis depends on C309, which acts as the Nucleophile. Active-site residues include H336 and D353. Positions 454 to 654 (ELGGRISGSV…LEIIIKFSDL (201 aa)) constitute a PAW domain.

It belongs to the transglutaminase-like superfamily. PNGase family. As to quaternary structure, component of a complex required to couple retrotranslocation, ubiquitination and deglycosylation composed of NGLY1, SAKS1, AMFR, VCP and RAD23B. Interacts with the proteasome components RAD23B and PSMC1. Interacts with directly with VCP. Interacts with DERL1, bringing it close to the endoplasmic reticulum membrane. Interacts with SAKS1. Requires Zn(2+) as cofactor.

The protein localises to the cytoplasm. It carries out the reaction Hydrolysis of an N(4)-(acetyl-beta-D-glucosaminyl)asparagine residue in which the glucosamine residue may be further glycosylated, to yield a (substituted) N-acetyl-beta-D-glucosaminylamine and a peptide containing an aspartate residue.. With respect to regulation, inhibited by Z-VAD-fmk, a well-known caspase inhibitor, which inhibits enzyme activity through covalent binding of the carbohydrate to the single Cys-306 residue. In terms of biological role, specifically deglycosylates the denatured form of N-linked glycoproteins in the cytoplasm and assists their proteasome-mediated degradation. Cleaves the beta-aspartyl-glucosamine (GlcNAc) of the glycan and the amide side chain of Asn, converting Asn to Asp. Prefers proteins containing high-mannose over those bearing complex type oligosaccharides. Can recognize misfolded proteins in the endoplasmic reticulum that are exported to the cytosol to be destroyed and deglycosylate them, while it has no activity toward native proteins. Deglycosylation is a prerequisite for subsequent proteasome-mediated degradation of some, but not all, misfolded glycoproteins. This chain is Peptide-N(4)-(N-acetyl-beta-glucosaminyl)asparagine amidase (NGLY1), found in Macaca fascicularis (Crab-eating macaque).